The primary structure comprises 929 residues: Chaperone protein ClpC1, chloroplastic (929 aa).

The N-terminal 38 residues, 1-38, are a transit peptide targeting the chloroplast; sequence MAMATRVLAQSTPPSLACYQRNVPSRGSGRSRRSVKMM. Residues 95-237 enclose the Clp R domain; the sequence is FERFTEKAIK…RTQVIRMVGE (143 aa). 2 repeat regions span residues 98-163 and 173-237; these read FTEK…IGRG and FTPR…MVGE. Residues 257 to 504 form an i region; sequence LEEYGTNLTK…RVRLRHAQVP (248 aa). ATP is bound at residue 302 to 309; the sequence is GEPGVGKT. One can recognise a UVR domain in the interval 511–546; sequence EKELRQITKEKNEAVRGQDFEKAGTLRDREIELRAE. The interval 552 to 571 is disordered; that stretch reads AKGKEMSKAESETGEEGPMV. The segment covering 553–562 has biased composition (basic and acidic residues); it reads KGKEMSKAES. Residues 571-762 are II; sequence VTESDIQHIV…LLIMTSNVGS (192 aa). Residue 645–652 coordinates ATP; that stretch reads GPTGVGKS. A compositionally biased stretch (polar residues) spans 908 to 919; it reads LNGGSGTPTTSL. Residues 908–929 are disordered; sequence LNGGSGTPTTSLEEQEDSLPVA. Acidic residues predominate over residues 920 to 929; sequence EEQEDSLPVA.

The protein belongs to the ClpA/ClpB family. ClpC subfamily. Homodimer. May form hexamer and interact with Clp core. Interacts (via N-terminus) with CLPS1. Interacts with CLPF. As to expression, highly expressed in rosette leaves. Expressed in roots, stems and inflorescences. Expressed in photosynthetic green tissues with high levels in young, developing leaf tissues.

The protein resides in the plastid. Its subcellular location is the chloroplast stroma. It is found in the chloroplast membrane. Its function is as follows. Molecular chaperone that hydrolyzes ATP and is associated with the chloroplast protein import apparatus. May function as the motor for chloroplast protein translocation, as translocation requires ATP hydrolysis in the stroma. May interact with a ClpP-like protease involved in degradation of denatured proteins in the chloroplast. Involved in the regulation of chlorophyll b biosynthesis through the destabilization of chlorophyllide a oxygenase (CAO) protein in response to the accumulation of chlorophyll b. Involved in leaf iron homeostasis. The sequence is that of Chaperone protein ClpC1, chloroplastic from Arabidopsis thaliana (Mouse-ear cress).